The sequence spans 269 residues: Indole-3-glycerol phosphate synthase (269 aa).

It belongs to the TrpC family.

It carries out the reaction 1-(2-carboxyphenylamino)-1-deoxy-D-ribulose 5-phosphate + H(+) = (1S,2R)-1-C-(indol-3-yl)glycerol 3-phosphate + CO2 + H2O. It participates in amino-acid biosynthesis; L-tryptophan biosynthesis; L-tryptophan from chorismate: step 4/5. The chain is Indole-3-glycerol phosphate synthase from Roseiflexus castenholzii (strain DSM 13941 / HLO8).